The primary structure comprises 532 residues: Probable rhamnogalacturonase B (532 aa).

An N-terminal signal peptide occupies residues Met-1–Ala-21. The cysteines at positions 42 and 68 are disulfide-linked. Asp-219 functions as the Proton donor in the catalytic mechanism. Cys-221 and Cys-238 form a disulfide bridge. An N-linked (GlcNAc...) asparagine glycan is attached at Asn-239. His-294 is an active-site residue. The N-linked (GlcNAc...) asparagine glycan is linked to Asn-321. Intrachain disulfides connect Cys-344–Cys-350 and Cys-374–Cys-383. Composition is skewed to low complexity over residues Thr-466–Ala-475 and Gln-490–Ser-499. Residues Thr-466–His-532 are disordered. The span at Ala-521 to His-532 shows a compositional bias: basic residues.

It belongs to the glycosyl hydrolase 28 family.

The protein resides in the secreted. It carries out the reaction Endohydrolysis of alpha-D-GalA-(1-&gt;2)-alpha-L-Rha glycosidic bond in the rhamnogalacturonan I backbone with initial inversion of anomeric configuration releasing oligosaccharides with beta-D-GalA at the reducing end.. Functionally, pectinolytic enzymes consist of four classes of enzymes: pectine lyase, polygalacturonase, pectin methylesterase and rhamnogalacturonase. Hydrolyzes alpha-D-galacturonopyranosyl-(1,2)-alpha-L-rhamnopyranosyl linkages in the backbone of the hairy regions of pectins. This chain is Probable rhamnogalacturonase B (rhgB), found in Aspergillus oryzae (strain ATCC 42149 / RIB 40) (Yellow koji mold).